The sequence spans 125 residues: Outer membrane protein assembly factor BamE (125 aa).

An N-terminal signal peptide occupies residues 1 to 17 (MNKTLILALSALLGLAA). Cysteine 18 carries N-palmitoyl cysteine lipidation. A lipid anchor (S-diacylglycerol cysteine) is attached at cysteine 18.

This sequence belongs to the BamE family. In terms of assembly, part of the Bam complex.

Its subcellular location is the cell outer membrane. Part of the outer membrane protein assembly complex, which is involved in assembly and insertion of beta-barrel proteins into the outer membrane. The sequence is that of Outer membrane protein assembly factor BamE from Neisseria meningitidis serogroup B (strain ATCC BAA-335 / MC58).